The sequence spans 445 residues: Methylenetetrahydrofolate--tRNA-(uracil-5-)-methyltransferase TrmFO (445 aa).

9-14 (GGGLAG) is an FAD binding site.

This sequence belongs to the MnmG family. TrmFO subfamily. It depends on FAD as a cofactor.

The protein localises to the cytoplasm. The catalysed reaction is uridine(54) in tRNA + (6R)-5,10-methylene-5,6,7,8-tetrahydrofolate + NADH + H(+) = 5-methyluridine(54) in tRNA + (6S)-5,6,7,8-tetrahydrofolate + NAD(+). The enzyme catalyses uridine(54) in tRNA + (6R)-5,10-methylene-5,6,7,8-tetrahydrofolate + NADPH + H(+) = 5-methyluridine(54) in tRNA + (6S)-5,6,7,8-tetrahydrofolate + NADP(+). Catalyzes the folate-dependent formation of 5-methyl-uridine at position 54 (M-5-U54) in all tRNAs. The polypeptide is Methylenetetrahydrofolate--tRNA-(uracil-5-)-methyltransferase TrmFO (Aquifex aeolicus (strain VF5)).